Reading from the N-terminus, the 234-residue chain is STARD3 N-terminal-like protein (234 aa).

Residue M1 is modified to N-acetylmethionine. The Cytoplasmic portion of the chain corresponds to 1 to 53; it reads MNHLPEDMENALTGSQSSHASLRNIHSINPTQLMARIESYEGREKKGISDVRR. Residues S15, S21, and S27 each carry the phosphoserine modification. The region spanning 48–218 is the MENTAL domain; the sequence is ISDVRRTFCL…YSPPESEAGS (171 aa). The chain crosses the membrane as a helical span at residues 54–74; the sequence is TFCLFVTFDLLFVTLLWIIEL. Residues 75 to 97 lie on the Extracellular side of the membrane; the sequence is NVNGGIENTLEKEVMQYDYYSSY. A helical membrane pass occupies residues 98 to 118; sequence FDIFLLAVFRFKVLILAYAVC. Residues 119 to 122 lie on the Cytoplasmic side of the membrane; sequence RLRH. A helical transmembrane segment spans residues 123–143; that stretch reads WWAIALTTAVTSAFLLAKVIL. At 144-150 the chain is on the extracellular side; sequence SKLFSQG. Residues 151 to 171 traverse the membrane as a helical segment; sequence AFGYVLPIISFILAWIETWFL. The Cytoplasmic portion of the chain corresponds to 172–234; the sequence is DFKVLPQEAE…QDSEKPLLEL (63 aa). Residue S193 is modified to Phosphoserine. Positions 200–234 are disordered; sequence PGGLSDGQFYSPPESEAGSEEAEEKQDSEKPLLEL. The short motif at 208–213 is the FFAT element; the sequence is FYSPPE. The span at 224–234 shows a compositional bias: basic and acidic residues; it reads KQDSEKPLLEL.

It belongs to the STARD3 family. In terms of assembly, homodimer. Interacts (via the MENTAL domain) with STARD3NL. Interacts (via FFAT motif) with VAPA. Interacts (via FFAT motif) with VAPB. Interacts (via FFAT motif) with MOSPD2 (via MSP domain).

The protein resides in the late endosome membrane. Tethering protein that creates contact site between the endoplasmic reticulum and late endosomes: localizes to late endosome membranes and contacts the endoplasmic reticulum via interaction with VAPA and VAPB. This Homo sapiens (Human) protein is STARD3 N-terminal-like protein.